Here is a 132-residue protein sequence, read N- to C-terminus: Small ribosomal subunit protein uS8 (132 aa).

Belongs to the universal ribosomal protein uS8 family. Part of the 30S ribosomal subunit. Contacts proteins S5 and S12.

Functionally, one of the primary rRNA binding proteins, it binds directly to 16S rRNA central domain where it helps coordinate assembly of the platform of the 30S subunit. The protein is Small ribosomal subunit protein uS8 of Heliobacterium modesticaldum (strain ATCC 51547 / Ice1).